We begin with the raw amino-acid sequence, 399 residues long: Ornithine aminotransferase (399 aa).

Lysine 255 bears the N6-(pyridoxal phosphate)lysine mark.

The protein belongs to the class-III pyridoxal-phosphate-dependent aminotransferase family. OAT subfamily. The cofactor is pyridoxal 5'-phosphate.

Its subcellular location is the cytoplasm. It catalyses the reaction a 2-oxocarboxylate + L-ornithine = L-glutamate 5-semialdehyde + an L-alpha-amino acid. Its pathway is amino-acid biosynthesis; L-proline biosynthesis; L-glutamate 5-semialdehyde from L-ornithine: step 1/1. Its function is as follows. Catalyzes the interconversion of ornithine to glutamate semialdehyde. The sequence is that of Ornithine aminotransferase from Brevibacillus brevis (strain 47 / JCM 6285 / NBRC 100599).